The chain runs to 242 residues: Uridylate kinase (242 aa).

Residue 16-19 (KVSG) participates in ATP binding. UMP is bound at residue Gly58. ATP-binding residues include Gly59 and Arg63. Residues Asp78 and 139 to 146 (TGNPFCTT) contribute to the UMP site. ATP is bound by residues Thr166, Gln167, Tyr172, and Asp175.

It belongs to the UMP kinase family. Homohexamer.

It is found in the cytoplasm. It carries out the reaction UMP + ATP = UDP + ADP. Its pathway is pyrimidine metabolism; CTP biosynthesis via de novo pathway; UDP from UMP (UMPK route): step 1/1. With respect to regulation, inhibited by UTP. Catalyzes the reversible phosphorylation of UMP to UDP. This is Uridylate kinase from Rickettsia felis (strain ATCC VR-1525 / URRWXCal2) (Rickettsia azadi).